The following is a 383-amino-acid chain: Presenilin-associated rhomboid-like protein A, mitochondrial (383 aa).

The N-terminal 37 residues, 1–37, are a transit peptide targeting the mitochondrion; sequence MAWRSCFMKWTQINSINASSLCPKSTRLNIHPQQRCG. Positions 35–75 are disordered; that stretch reads RCGFRKTERPSESKKGVQETEAEAGGHNRAVPPKPVPPLPP. Over 38–83 the chain is Mitochondrial matrix; the sequence is FRKTERPSESKKGVQETEAEAGGHNRAVPPKPVPPLPPRRPHQLFR. A compositionally biased stretch (basic and acidic residues) spans 39–52; sequence RKTERPSESKKGVQ. A compositionally biased stretch (pro residues) spans 66 to 75; sequence PPKPVPPLPP. A helical membrane pass occupies residues 84-104; it reads PLVFTVGFTGCSFGAAAILQY. Residues 105–168 lie on the Mitochondrial intermembrane side of the membrane; the sequence is ESVKSRVQLA…FWSGLSEGQK (64 aa). Residues 169 to 189 traverse the membrane as a helical segment; the sequence is TVTGIIALNTVVLCCWRVPAM. Topologically, residues 190–219 are mitochondrial matrix; the sequence is QRFLVKYFTSNPASKTRCLPMVLSSFSHYS. The chain crosses the membrane as a helical span at residues 220–240; sequence VIHMVVNMYVLWTFSSSIVSL. Over 241–245 the chain is Mitochondrial intermembrane; it reads LGREQ. Residues 246-266 traverse the membrane as a helical segment; it reads FLALYLSGGVISTFVSYVFKT. The Mitochondrial matrix portion of the chain corresponds to 267–271; sequence ATGRL. A helical transmembrane segment spans residues 272–292; that stretch reads GPSLGASGSIMTVLAAVCTKI. S278 (nucleophile) is an active-site residue. Over 293-298 the chain is Mitochondrial intermembrane; sequence PEAKLG. A helical membrane pass occupies residues 299–319; the sequence is IVLLPVISFSAGNALKALVAL. At 320–334 the chain is on the mitochondrial matrix side; it reads DIAGLVLGWRFFDHA. The helical transmembrane segment at 335–355 threads the bilayer; sequence AHLGGALFGVWYIGYGHELIW. H336 is an active-site residue. Over 356–383 the chain is Mitochondrial intermembrane; it reads RKREPLIKFWHELRNMSPGRPGPGGGGG.

This sequence belongs to the peptidase S54 family.

It is found in the mitochondrion inner membrane. It catalyses the reaction Cleaves type-1 transmembrane domains using a catalytic dyad composed of serine and histidine that are contributed by different transmembrane domains.. Functionally, required for the control of apoptosis during postnatal growth. Essential for proteolytic processing of an antiapoptotic form of opa1 which prevents the release of mitochondrial cytochrome c in response to intrinsic apoptotic signals. The protein is Presenilin-associated rhomboid-like protein A, mitochondrial (parla) of Danio rerio (Zebrafish).